The following is a 437-amino-acid chain: Succinyl-CoA:cyclohexane-1-carboxylate CoA transferase (437 aa).

Position 221–225 (221–225 (GWGGI)) interacts with CoA. Glu244 acts as the 5-glutamyl coenzyme A thioester intermediate in catalysis. CoA-binding residues include Leu319, Gly342, and Lys367.

The protein belongs to the acetyl-CoA hydrolase/transferase family. As to quaternary structure, homodimer.

The enzyme catalyses cyclohexane-1-carboxylate + succinyl-CoA = cyclohexane-1-carbonyl-CoA + succinate. It catalyses the reaction cyclohexane-1-carboxylate + butanoyl-CoA = cyclohexane-1-carbonyl-CoA + butanoate. Acyl-CoA transferase involved in the anaerobic degradation of cyclohexane carboxylic acid (CHC). Catalyzes the activation of CHC to cyclohexane-1-carbonyl-CoA (CHCoA). Benzoic acid and cyclohex-1-ene-1-carboxylic acid can also be used as substrates, but with lower specific activity. Shows highest activity with succinyl-CoA and butanoyl-coA as a CoA donor, and lower activity with crotonyl-CoA, acetyl-CoA, glutaryl-CoA, CH1eneCoA, propionyl-CoA and acetoacetyl-CoA. In vitro, the enzyme can use butanoyl-coA as a CoA donor with greater efficiency than succinyl-CoA. However, succinyl-CoA is the most abundant CoA ester in exponentially grown cells, whereas butanoyl-coA is hardly detectable, indicating that succinyl-CoA is the natural CoA donor for CHC activation. In Geobacter metallireducens (strain ATCC 53774 / DSM 7210 / GS-15), this protein is Succinyl-CoA:cyclohexane-1-carboxylate CoA transferase.